Here is a 39-residue protein sequence, read N- to C-terminus: Photosystem II reaction center protein L (39 aa).

Residues 18–38 traverse the membrane as a helical segment; sequence SLYLGLLLIAVLGILFSSYFF.

Belongs to the PsbL family. PSII is composed of 1 copy each of membrane proteins PsbA, PsbB, PsbC, PsbD, PsbE, PsbF, PsbH, PsbI, PsbJ, PsbK, PsbL, PsbM, PsbT, PsbX, PsbY, PsbZ, Psb30/Ycf12, peripheral proteins PsbO, CyanoQ (PsbQ), PsbU, PsbV and a large number of cofactors. It forms dimeric complexes.

The protein localises to the cellular thylakoid membrane. Its function is as follows. One of the components of the core complex of photosystem II (PSII). PSII is a light-driven water:plastoquinone oxidoreductase that uses light energy to abstract electrons from H(2)O, generating O(2) and a proton gradient subsequently used for ATP formation. It consists of a core antenna complex that captures photons, and an electron transfer chain that converts photonic excitation into a charge separation. This subunit is found at the monomer-monomer interface and is required for correct PSII assembly and/or dimerization. The polypeptide is Photosystem II reaction center protein L (Crocosphaera subtropica (strain ATCC 51142 / BH68) (Cyanothece sp. (strain ATCC 51142))).